Consider the following 406-residue polypeptide: 4-hydroxy-3-methylbut-2-en-1-yl diphosphate synthase (ferredoxin) (406 aa).

The [4Fe-4S] cluster site is built by C315, C318, C349, and E356.

This sequence belongs to the IspG family. The cofactor is [4Fe-4S] cluster.

The catalysed reaction is (2E)-4-hydroxy-3-methylbut-2-enyl diphosphate + 2 oxidized [2Fe-2S]-[ferredoxin] + H2O = 2-C-methyl-D-erythritol 2,4-cyclic diphosphate + 2 reduced [2Fe-2S]-[ferredoxin] + H(+). It functions in the pathway isoprenoid biosynthesis; isopentenyl diphosphate biosynthesis via DXP pathway; isopentenyl diphosphate from 1-deoxy-D-xylulose 5-phosphate: step 5/6. Functionally, converts 2C-methyl-D-erythritol 2,4-cyclodiphosphate (ME-2,4cPP) into 1-hydroxy-2-methyl-2-(E)-butenyl 4-diphosphate. The polypeptide is 4-hydroxy-3-methylbut-2-en-1-yl diphosphate synthase (ferredoxin) (Rippkaea orientalis (strain PCC 8801 / RF-1) (Cyanothece sp. (strain PCC 8801))).